Here is a 382-residue protein sequence, read N- to C-terminus: Calcium/calmodulin-dependent protein kinase (382 aa).

Residues 23–278 (YKFGRTLGAG…SKEALGHIWL (256 aa)) enclose the Protein kinase domain. ATP is bound by residues 29–37 (LGAGTYGVV) and Lys50. The active-site Proton acceptor is the Asp142. The tract at residues 291–301 (ELEAYRRRARL) is calmodulin-binding. Disordered stretches follow at residues 318–344 (KEHE…GDGS) and 359–382 (QKQE…FSNA).

The protein belongs to the protein kinase superfamily. CAMK Ser/Thr protein kinase family. CaMK subfamily.

The enzyme catalyses L-seryl-[protein] + ATP = O-phospho-L-seryl-[protein] + ADP + H(+). It carries out the reaction L-threonyl-[protein] + ATP = O-phospho-L-threonyl-[protein] + ADP + H(+). In Metarhizium anisopliae (Entomophthora anisopliae), this protein is Calcium/calmodulin-dependent protein kinase.